A 231-amino-acid chain; its full sequence is 5'-methylthioadenosine/S-adenosylhomocysteine nucleosidase (231 aa).

E12 serves as the catalytic Proton acceptor. Substrate-binding positions include G78, V153, and 174–175 (ME). D198 serves as the catalytic Proton donor.

This sequence belongs to the PNP/UDP phosphorylase family. MtnN subfamily.

The catalysed reaction is S-adenosyl-L-homocysteine + H2O = S-(5-deoxy-D-ribos-5-yl)-L-homocysteine + adenine. It carries out the reaction S-methyl-5'-thioadenosine + H2O = 5-(methylsulfanyl)-D-ribose + adenine. The enzyme catalyses 5'-deoxyadenosine + H2O = 5-deoxy-D-ribose + adenine. It participates in amino-acid biosynthesis; L-methionine biosynthesis via salvage pathway; S-methyl-5-thio-alpha-D-ribose 1-phosphate from S-methyl-5'-thioadenosine (hydrolase route): step 1/2. Its function is as follows. Catalyzes the irreversible cleavage of the glycosidic bond in both 5'-methylthioadenosine (MTA) and S-adenosylhomocysteine (SAH/AdoHcy) to adenine and the corresponding thioribose, 5'-methylthioribose and S-ribosylhomocysteine, respectively. Also cleaves 5'-deoxyadenosine, a toxic by-product of radical S-adenosylmethionine (SAM) enzymes, into 5-deoxyribose and adenine. This Aliivibrio fischeri (strain MJ11) (Vibrio fischeri) protein is 5'-methylthioadenosine/S-adenosylhomocysteine nucleosidase.